A 400-amino-acid chain; its full sequence is Nicotinate phosphoribosyltransferase (400 aa).

Histidine 220 carries the phosphohistidine; by autocatalysis modification.

The protein belongs to the NAPRTase family. In terms of processing, transiently phosphorylated on a His residue during the reaction cycle. Phosphorylation strongly increases the affinity for substrates and increases the rate of nicotinate D-ribonucleotide production. Dephosphorylation regenerates the low-affinity form of the enzyme, leading to product release.

The enzyme catalyses nicotinate + 5-phospho-alpha-D-ribose 1-diphosphate + ATP + H2O = nicotinate beta-D-ribonucleotide + ADP + phosphate + diphosphate. It participates in cofactor biosynthesis; NAD(+) biosynthesis; nicotinate D-ribonucleotide from nicotinate: step 1/1. Its function is as follows. Catalyzes the synthesis of beta-nicotinate D-ribonucleotide from nicotinate and 5-phospho-D-ribose 1-phosphate at the expense of ATP. The chain is Nicotinate phosphoribosyltransferase from Salmonella choleraesuis (strain SC-B67).